Reading from the N-terminus, the 163-residue chain is Phosphopantetheine adenylyltransferase (163 aa).

A substrate-binding site is contributed by S10. ATP contacts are provided by residues S10 to F11 and H18. Residues K42, L74, and R88 each contribute to the substrate site. ATP is bound by residues G89–R91, E99, and Y124–S130.

Belongs to the bacterial CoaD family. In terms of assembly, homohexamer. The cofactor is Mg(2+).

Its subcellular location is the cytoplasm. The enzyme catalyses (R)-4'-phosphopantetheine + ATP + H(+) = 3'-dephospho-CoA + diphosphate. It participates in cofactor biosynthesis; coenzyme A biosynthesis; CoA from (R)-pantothenate: step 4/5. Reversibly transfers an adenylyl group from ATP to 4'-phosphopantetheine, yielding dephospho-CoA (dPCoA) and pyrophosphate. The protein is Phosphopantetheine adenylyltransferase of Bacillus cereus (strain G9842).